A 382-amino-acid polypeptide reads, in one-letter code: Dual-specificity RNA methyltransferase RlmN (382 aa).

The Proton acceptor role is filled by Glu94. Residues 100–336 form the Radical SAM core domain; it reads EANRGTLCVS…NTITRKTRGD (237 aa). Cys107 and Cys342 form a disulfide bridge. [4Fe-4S] cluster contacts are provided by Cys114, Cys118, and Cys121. S-adenosyl-L-methionine contacts are provided by residues 168–169, Ser200, 222–224, and Asn299; these read GE and SLH. Cys342 acts as the S-methylcysteine intermediate in catalysis.

This sequence belongs to the radical SAM superfamily. RlmN family. Requires [4Fe-4S] cluster as cofactor.

It is found in the cytoplasm. It carries out the reaction adenosine(2503) in 23S rRNA + 2 reduced [2Fe-2S]-[ferredoxin] + 2 S-adenosyl-L-methionine = 2-methyladenosine(2503) in 23S rRNA + 5'-deoxyadenosine + L-methionine + 2 oxidized [2Fe-2S]-[ferredoxin] + S-adenosyl-L-homocysteine. The catalysed reaction is adenosine(37) in tRNA + 2 reduced [2Fe-2S]-[ferredoxin] + 2 S-adenosyl-L-methionine = 2-methyladenosine(37) in tRNA + 5'-deoxyadenosine + L-methionine + 2 oxidized [2Fe-2S]-[ferredoxin] + S-adenosyl-L-homocysteine. Its function is as follows. Specifically methylates position 2 of adenine 2503 in 23S rRNA and position 2 of adenine 37 in tRNAs. m2A2503 modification seems to play a crucial role in the proofreading step occurring at the peptidyl transferase center and thus would serve to optimize ribosomal fidelity. This is Dual-specificity RNA methyltransferase RlmN from Legionella pneumophila (strain Paris).